The following is a 154-amino-acid chain: Transmembrane protein 35B (154 aa).

An N-terminal signal peptide occupies residues 1-22 (MALLLSVLRVLLGGFFALVGLA). Transmembrane regions (helical) follow at residues 63-83 (IAVGFLELLAGLLLVMGPPML), 85-105 (EISNLFLILLMMGAIFTLAAL), and 112-132 (CIPAIVCLGFLLLLNVGQLLA).

This sequence belongs to the DoxX family.

It is found in the membrane. This is Transmembrane protein 35B from Homo sapiens (Human).